The chain runs to 321 residues: Olfactory receptor 51V1 (321 aa).

Residues 1–34 (MFLSSRMITSVSPSTSTNSSFLLTGFSGMEQQYP) are Extracellular-facing. A glycan (N-linked (GlcNAc...) asparagine) is linked at N18. The helical transmembrane segment at 35–55 (WLSIPFSSIYAMVLLGNCMVL) threads the bilayer. Residues 56–63 (HVIWTEPS) are Cytoplasmic-facing. The chain crosses the membrane as a helical span at residues 64-84 (LHQPMFYFLSMLALTDLCMGL). At 85-108 (STVYTVLGILWGIIREISLDSCIA) the chain is on the extracellular side. A disulfide bridge connects residues C106 and C188. The helical transmembrane segment at 109-129 (QSYFIHGLSFMESSVLLTMAF) threads the bilayer. The Cytoplasmic portion of the chain corresponds to 130-148 (DRYIAICNPLRYSSILTNS). A helical transmembrane segment spans residues 149–169 (RIIKIGLTIIGRSFFFITPPI). At 170-205 (ICLKFFNYCHFHILSHSFCLHQDLLRLACSDIRFNS) the chain is on the extracellular side. A helical transmembrane segment spans residues 206 to 226 (YYALMLVICILLLDAILILFS). The Cytoplasmic portion of the chain corresponds to 227 to 246 (YILILKSVLAVASQEERHKL). The helical transmembrane segment at 247–267 (FQTCISHICAVLVFYIPIISL) threads the bilayer. Residues 268-282 (TMVHRFGKHLSPVAH) are Extracellular-facing. Residues 283 to 303 (VLIGNIYILFPPLMNPIIYSV) form a helical membrane-spanning segment. At 304 to 321 (KTQQIHTRMLRLFSLKRY) the chain is on the cytoplasmic side.

This sequence belongs to the G-protein coupled receptor 1 family.

The protein resides in the cell membrane. Functionally, odorant receptor. The polypeptide is Olfactory receptor 51V1 (OR51V1) (Homo sapiens (Human)).